The primary structure comprises 277 residues: Intercellular adhesion molecule 2 (277 aa).

Positions 1–22 (MSSFACWSLSLLILFYSPGSGE) are cleaved as a signal peptide. Topologically, residues 23–222 (KAFEVYIWSE…EVYEPMQDNQ (200 aa)) are extracellular. Ig-like C2-type domains follow at residues 39–98 (TESW…CSGK) and 127–196 (GEDF…LDLR). Asparagine 45, asparagine 82, asparagine 158, asparagine 176, and asparagine 186 each carry an N-linked (GlcNAc...) asparagine glycan. Intrachain disulfides connect cysteine 46-cysteine 91, cysteine 50-cysteine 95, and cysteine 134-cysteine 189. Residues 223 to 247 (MVIIIVVVSILLFLFVTSVLLCFIF) form a helical membrane-spanning segment. Residues 248–277 (GQHWHRRRTGTYGVLAAWRRLPRAFRARPV) lie on the Cytoplasmic side of the membrane. Residues 250-277 (HWHRRRTGTYGVLAAWRRLPRAFRARPV) are required for interaction with EZR, MSN and RDX and co-localization to microvilli.

It belongs to the immunoglobulin superfamily. ICAM family. In terms of assembly, interacts with RDX, EZR and MSN. As to expression, expressed in endothelial cells and leukocytes. High levels found in lung.

The protein localises to the membrane. It localises to the cell projection. Its subcellular location is the microvillus. Its function is as follows. ICAM proteins are ligands for the leukocyte adhesion protein LFA-1 (integrin alpha-L/beta-2). ICAM2 may play a role in lymphocyte recirculation by blocking LFA-1-dependent cell adhesion. It mediates adhesive interactions important for antigen-specific immune response, NK-cell mediated clearance, lymphocyte recirculation, and other cellular interactions important for immune response and surveillance. The polypeptide is Intercellular adhesion molecule 2 (Icam2) (Mus musculus (Mouse)).